A 222-amino-acid chain; its full sequence is Putative adhesin RP828 (222 aa).

The signal sequence occupies residues M1–A22.

In terms of biological role, adheres to biotinylated epithelial (Vero cell) proteins. The sequence is that of Putative adhesin RP828 from Rickettsia prowazekii (strain Madrid E).